The sequence spans 383 residues: 2-aminoethylphosphonate--pyruvate transaminase (383 aa).

N6-(pyridoxal phosphate)lysine is present on lysine 192.

It belongs to the class-V pyridoxal-phosphate-dependent aminotransferase family. PhnW subfamily. In terms of assembly, homodimer. Requires pyridoxal 5'-phosphate as cofactor.

It carries out the reaction (2-aminoethyl)phosphonate + pyruvate = phosphonoacetaldehyde + L-alanine. In terms of biological role, involved in phosphonate degradation. This chain is 2-aminoethylphosphonate--pyruvate transaminase, found in Rhizobium meliloti (strain 1021) (Ensifer meliloti).